Consider the following 226-residue polypeptide: Protein pdh1 (226 aa).

The N-terminal stretch at 1 to 26 is a signal peptide; sequence MNHFSKFSVTKRLLILEVLFSAISFG. The Extracellular portion of the chain corresponds to 27–41; the sequence is ISIYIKVFGRSSIVT. A helical membrane pass occupies residues 42 to 62; sequence FFLLCFHLVPNALFLFPWTII. The Cytoplasmic portion of the chain corresponds to 63-65; it reads TTS. A helical membrane pass occupies residues 66–86; it reads FVDANVFTLLSSILILSVYGV. At 87 to 97 the chain is on the extracellular side; that stretch reads EIERSWGHKEY. Residues 98–118 form a helical membrane-spanning segment; it reads LLFCQFLTVIPNIAVLIPCFI. Residues 119–191 are Cytoplasmic-facing; sequence AYKITDSHYL…VFQSFPWTYF (73 aa). The helical transmembrane segment at 192-212 threads the bilayer; the sequence is CLAVSGTCISELYVLFVHPVV. At 213–226 the chain is on the extracellular side; that stretch reads QELFHLESHTQLPI.

The protein localises to the membrane. This is Protein pdh1 (pdh1) from Schizosaccharomyces pombe (strain 972 / ATCC 24843) (Fission yeast).